The primary structure comprises 476 residues: tRNA (cytosine(72)-C(5))-methyltransferase NSUN6 (476 aa).

A PUA domain is found at 111–203 (QGEVIVGAQC…IGIRMTEPIY (93 aa)). S-adenosyl-L-methionine contacts are provided by residues 242-248 (CAAPGGK), D266, D293, and D323. C373 acts as the Nucleophile in catalysis. K419 bears the N6-acetyllysine mark.

This sequence belongs to the class I-like SAM-binding methyltransferase superfamily. RsmB/NOP family.

The protein localises to the cytoplasm. The catalysed reaction is cytidine(72) in tRNA(Thr) + S-adenosyl-L-methionine = 5-methylcytidine(72) in tRNA(Thr) + S-adenosyl-L-homocysteine + H(+). It catalyses the reaction cytidine(72) in tRNA(Cys) + S-adenosyl-L-methionine = 5-methylcytidine(72) in tRNA(Cys) + S-adenosyl-L-homocysteine + H(+). S-adenosyl-L-methionine-dependent methyltransferase that specifically methylates the C5 position of cytosine 72 in tRNA(Thr)(TGT) and tRNA(Cys)(GCA). In vitro also methylates tRNA(Thr)(AGT). Methylation requires, in the acceptor stem region, the presence of the 3'-CCA terminus, the target site C72, the discriminator base U73, and the second and third base pairs (2:71 and 3:70) in the tRNA substrates. This chain is tRNA (cytosine(72)-C(5))-methyltransferase NSUN6, found in Mus musculus (Mouse).